Consider the following 265-residue polypeptide: Phosphatidylglycerol--prolipoprotein diacylglyceryl transferase (265 aa).

7 helical membrane-spanning segments follow: residues Leu-17–Ala-37, Met-59–Tyr-79, Val-94–Ile-114, Val-123–Leu-143, Ser-177–Ala-197, Met-204–Phe-224, and Ile-238–Ile-258. Arg-142 serves as a coordination point for a 1,2-diacyl-sn-glycero-3-phospho-(1'-sn-glycerol).

This sequence belongs to the Lgt family.

The protein resides in the cell inner membrane. It catalyses the reaction L-cysteinyl-[prolipoprotein] + a 1,2-diacyl-sn-glycero-3-phospho-(1'-sn-glycerol) = an S-1,2-diacyl-sn-glyceryl-L-cysteinyl-[prolipoprotein] + sn-glycerol 1-phosphate + H(+). Its pathway is protein modification; lipoprotein biosynthesis (diacylglyceryl transfer). Its function is as follows. Catalyzes the transfer of the diacylglyceryl group from phosphatidylglycerol to the sulfhydryl group of the N-terminal cysteine of a prolipoprotein, the first step in the formation of mature lipoproteins. In Janthinobacterium sp. (strain Marseille) (Minibacterium massiliensis), this protein is Phosphatidylglycerol--prolipoprotein diacylglyceryl transferase.